Reading from the N-terminus, the 91-residue chain is MSFFTMCVLAAGIGMALGTLGTGIGQGLAVKSAVEGVSRNPGASGKILTTMMIGLAMIESLAIYALVVCLIILFANPYKDIALELAKTVAK.

2 helical membrane passes run 4–24 (FTMC…GTGI) and 53–73 (IGLA…LIIL).

The protein belongs to the ATPase C chain family. F-type ATPases have 2 components, F(1) - the catalytic core - and F(0) - the membrane proton channel. F(1) has five subunits: alpha(3), beta(3), gamma(1), delta(1), epsilon(1). F(0) has three main subunits: a(1), b(2) and c(10-14). The alpha and beta chains form an alternating ring which encloses part of the gamma chain. F(1) is attached to F(0) by a central stalk formed by the gamma and epsilon chains, while a peripheral stalk is formed by the delta and b chains.

It is found in the cell inner membrane. In terms of biological role, f(1)F(0) ATP synthase produces ATP from ADP in the presence of a proton or sodium gradient. F-type ATPases consist of two structural domains, F(1) containing the extramembraneous catalytic core and F(0) containing the membrane proton channel, linked together by a central stalk and a peripheral stalk. During catalysis, ATP synthesis in the catalytic domain of F(1) is coupled via a rotary mechanism of the central stalk subunits to proton translocation. Functionally, key component of the F(0) channel; it plays a direct role in translocation across the membrane. A homomeric c-ring of between 10-14 subunits forms the central stalk rotor element with the F(1) delta and epsilon subunits. The chain is ATP synthase subunit c from Geotalea daltonii (strain DSM 22248 / JCM 15807 / FRC-32) (Geobacter daltonii).